Consider the following 413-residue polypeptide: MNKSYLYSFFFHGSLVKRISVGLLLGLLLALIAPSLQGVLGFNLAEKAGFLGKIFVRSLRAVAPILVFLLVISAIANKQLGTKSNMKSIVVLYLLGTFLAALTSVLFSFALPTEIALKTQEGSLSPPNEVSEVLSTLVLNVVDNPINALFNANFIGILFWAIGLGIALRYASDTTKNVMNDFSEAVSRIVHFIISFAPIGVFGLVAETLTDKGLGALLDYMQLLVVLIGSMLFTAFVINPILVFWKIRRNPYPLVWTCVRESGLTAFLTRSSAANIPVNMELSKRLKLDEETYSVSIPLGANINMAGAAITITVLTLAAVHTLGIEVSFPTAVLLSVVASICACGASGVAGGSLLLIPLACSLFGIPNDIAAQVIGVGFVIGVLQDSTETALNSSTDVIFTAAVCWSEENKNS.

9 consecutive transmembrane segments (helical) span residues 22-42 (GLLLGLLLALIAPSLQGVLGF), 61-81 (AVAPILVFLLVISAIANKQLG), 89-109 (IVVLYLLGTFLAALTSVLFSF), 148-168 (ALFNANFIGILFWAIGLGIAL), 189-209 (IVHFIISFAPIGVFGLVAETL), 224-244 (LVVLIGSMLFTAFVINPILVF), 305-325 (MAGAAITITVLTLAAVHTLGI), 337-357 (VVASICACGASGVAGGSLLLI), and 363-383 (LFGIPNDIAAQVIGVGFVIGV).

It belongs to the dicarboxylate/amino acid:cation symporter (DAACS) (TC 2.A.23) family.

The protein localises to the cell inner membrane. It carries out the reaction L-serine(in) + Na(+)(in) = L-serine(out) + Na(+)(out). The catalysed reaction is L-threonine(in) + Na(+)(in) = L-threonine(out) + Na(+)(out). Involved in the import of serine and threonine into the cell, with the concomitant import of sodium (symport system). This is Serine/threonine transporter SstT from Histophilus somni (strain 129Pt) (Haemophilus somnus).